Here is a 116-residue protein sequence, read N- to C-terminus: Large ribosomal subunit protein uL18 (116 aa).

Belongs to the universal ribosomal protein uL18 family. In terms of assembly, part of the 50S ribosomal subunit; part of the 5S rRNA/L5/L18/L25 subcomplex. Contacts the 5S and 23S rRNAs.

Its function is as follows. This is one of the proteins that bind and probably mediate the attachment of the 5S RNA into the large ribosomal subunit, where it forms part of the central protuberance. The polypeptide is Large ribosomal subunit protein uL18 (Shewanella frigidimarina (strain NCIMB 400)).